A 152-amino-acid polypeptide reads, in one-letter code: Nucleoside diphosphate kinase (152 aa).

Residues Lys-11, Phe-59, Arg-87, Thr-93, Arg-104, and Asn-114 each contribute to the ATP site. The Pros-phosphohistidine intermediate role is filled by His-117.

Belongs to the NDK family. In terms of assembly, homotetramer. It depends on Mg(2+) as a cofactor.

It is found in the cytoplasm. It carries out the reaction a 2'-deoxyribonucleoside 5'-diphosphate + ATP = a 2'-deoxyribonucleoside 5'-triphosphate + ADP. It catalyses the reaction a ribonucleoside 5'-diphosphate + ATP = a ribonucleoside 5'-triphosphate + ADP. Major role in the synthesis of nucleoside triphosphates other than ATP. The ATP gamma phosphate is transferred to the NDP beta phosphate via a ping-pong mechanism, using a phosphorylated active-site intermediate. The chain is Nucleoside diphosphate kinase from Prochlorococcus marinus (strain MIT 9303).